Reading from the N-terminus, the 496-residue chain is Squalene epoxidase ERG1 (496 aa).

The Cytoplasmic segment spans residues 1–16 (MSAVNVAPELINADNT). The helical transmembrane segment at 17–37 (ITYDAIVIGAGVIGPCVATGL) threads the bilayer. FAD is bound by residues 28-29 (VI), 48-49 (ER), arginine 56, and arginine 158. Residues 38-474 (ARKGKKVLIV…FLGLPMALLE (437 aa)) are Lumenal-facing. Residues lysine 284, lysine 289, and lysine 311 each participate in a glycyl lysine isopeptide (Lys-Gly) (interchain with G-Cter in ubiquitin) cross-link. Residues aspartate 335 and methionine 348 each contribute to the FAD site. A helical membrane pass occupies residues 475–495 (GIMILITAIRVFTPFLFGELI). Residue glycine 496 is a topological domain, cytoplasmic.

It belongs to the squalene monooxygenase family. As to quaternary structure, interacts with ERG28. It depends on FAD as a cofactor.

Its subcellular location is the microsome membrane. It is found in the endoplasmic reticulum membrane. The protein resides in the lipid droplet. It catalyses the reaction squalene + reduced [NADPH--hemoprotein reductase] + O2 = (S)-2,3-epoxysqualene + oxidized [NADPH--hemoprotein reductase] + H2O + H(+). Its pathway is terpene metabolism; lanosterol biosynthesis; lanosterol from farnesyl diphosphate: step 2/3. Inhibited by the allylamine antimycotic drugs. Functionally, squalene epoxidase; part of the third module of ergosterol biosynthesis pathway that includes the late steps of the pathway. ERG1 catalyzes the epoxidation of squalene into 2,3-epoxysqualene. The third module or late pathway involves the ergosterol synthesis itself through consecutive reactions that mainly occur in the endoplasmic reticulum (ER) membrane. Firstly, the squalene synthase ERG9 catalyzes the condensation of 2 farnesyl pyrophosphate moieties to form squalene, which is the precursor of all steroids. Squalene synthase is crucial for balancing the incorporation of farnesyl diphosphate (FPP) into sterol and nonsterol isoprene synthesis. Secondly, the squalene epoxidase ERG1 catalyzes the stereospecific oxidation of squalene to (S)-2,3-epoxysqualene, which is considered to be a rate-limiting enzyme in steroid biosynthesis. Then, the lanosterol synthase ERG7 catalyzes the cyclization of (S)-2,3 oxidosqualene to lanosterol, a reaction that forms the sterol core. In the next steps, lanosterol is transformed to zymosterol through a complex process involving various demethylation, reduction and desaturation reactions. The lanosterol 14-alpha-demethylase ERG11 (also known as CYP51) catalyzes C14-demethylation of lanosterol to produce 4,4'-dimethyl cholesta-8,14,24-triene-3-beta-ol, which is critical for ergosterol biosynthesis. The C-14 reductase ERG24 reduces the C14=C15 double bond of 4,4-dimethyl-cholesta-8,14,24-trienol to produce 4,4-dimethyl-cholesta-8,24-dienol. 4,4-dimethyl-cholesta-8,24-dienol is substrate of the C-4 demethylation complex ERG25-ERG26-ERG27 in which ERG25 catalyzes the three-step monooxygenation required for the demethylation of 4,4-dimethyl and 4alpha-methylsterols, ERG26 catalyzes the oxidative decarboxylation that results in a reduction of the 3-beta-hydroxy group at the C-3 carbon to an oxo group, and ERG27 is responsible for the reduction of the keto group on the C-3. ERG28 has a role as a scaffold to help anchor ERG25, ERG26 and ERG27 to the endoplasmic reticulum and ERG29 regulates the activity of the iron-containing C4-methylsterol oxidase ERG25. Then, the sterol 24-C-methyltransferase ERG6 catalyzes the methyl transfer from S-adenosyl-methionine to the C-24 of zymosterol to form fecosterol. The C-8 sterol isomerase ERG2 catalyzes the reaction which results in unsaturation at C-7 in the B ring of sterols and thus converts fecosterol to episterol. The sterol-C5-desaturase ERG3 then catalyzes the introduction of a C-5 double bond in the B ring to produce 5-dehydroepisterol. The C-22 sterol desaturase ERG5 further converts 5-dehydroepisterol into ergosta-5,7,22,24(28)-tetraen-3beta-ol by forming the C-22(23) double bond in the sterol side chain. Finally, ergosta-5,7,22,24(28)-tetraen-3beta-ol is substrate of the C-24(28) sterol reductase ERG4 to produce ergosterol. The polypeptide is Squalene epoxidase ERG1 (Saccharomyces cerevisiae (strain ATCC 204508 / S288c) (Baker's yeast)).